The sequence spans 333 residues: Holliday junction branch migration complex subunit RuvB (333 aa).

The large ATPase domain (RuvB-L) stretch occupies residues M1–Y182. Residues L21, R22, G63, K66, T67, T68, E129–Y131, R172, Y182, and R219 contribute to the ATP site. Residue T67 coordinates Mg(2+). Residues Q183–Q253 form a small ATPAse domain (RuvB-S) region. Residues R256–R333 are head domain (RuvB-H). DNA contacts are provided by R311 and R316.

It belongs to the RuvB family. In terms of assembly, homohexamer. Forms an RuvA(8)-RuvB(12)-Holliday junction (HJ) complex. HJ DNA is sandwiched between 2 RuvA tetramers; dsDNA enters through RuvA and exits via RuvB. An RuvB hexamer assembles on each DNA strand where it exits the tetramer. Each RuvB hexamer is contacted by two RuvA subunits (via domain III) on 2 adjacent RuvB subunits; this complex drives branch migration. In the full resolvosome a probable DNA-RuvA(4)-RuvB(12)-RuvC(2) complex forms which resolves the HJ.

The protein localises to the cytoplasm. It catalyses the reaction ATP + H2O = ADP + phosphate + H(+). The RuvA-RuvB-RuvC complex processes Holliday junction (HJ) DNA during genetic recombination and DNA repair, while the RuvA-RuvB complex plays an important role in the rescue of blocked DNA replication forks via replication fork reversal (RFR). RuvA specifically binds to HJ cruciform DNA, conferring on it an open structure. The RuvB hexamer acts as an ATP-dependent pump, pulling dsDNA into and through the RuvAB complex. RuvB forms 2 homohexamers on either side of HJ DNA bound by 1 or 2 RuvA tetramers; 4 subunits per hexamer contact DNA at a time. Coordinated motions by a converter formed by DNA-disengaged RuvB subunits stimulates ATP hydrolysis and nucleotide exchange. Immobilization of the converter enables RuvB to convert the ATP-contained energy into a lever motion, pulling 2 nucleotides of DNA out of the RuvA tetramer per ATP hydrolyzed, thus driving DNA branch migration. The RuvB motors rotate together with the DNA substrate, which together with the progressing nucleotide cycle form the mechanistic basis for DNA recombination by continuous HJ branch migration. Branch migration allows RuvC to scan DNA until it finds its consensus sequence, where it cleaves and resolves cruciform DNA. This chain is Holliday junction branch migration complex subunit RuvB, found in Geobacillus thermodenitrificans (strain NG80-2).